Here is a 250-residue protein sequence, read N- to C-terminus: 5-oxoprolinase subunit A (250 aa).

The protein belongs to the LamB/PxpA family. Forms a complex composed of PxpA, PxpB and PxpC.

The enzyme catalyses 5-oxo-L-proline + ATP + 2 H2O = L-glutamate + ADP + phosphate + H(+). Catalyzes the cleavage of 5-oxoproline to form L-glutamate coupled to the hydrolysis of ATP to ADP and inorganic phosphate. This Paraburkholderia xenovorans (strain LB400) protein is 5-oxoprolinase subunit A.